A 393-amino-acid chain; its full sequence is Formate-dependent phosphoribosylglycinamide formyltransferase (393 aa).

N(1)-(5-phospho-beta-D-ribosyl)glycinamide contacts are provided by residues 15–16 (EL) and E75. ATP contacts are provided by residues R107, K148, 153–158 (SSGKGQ), 188–191 (EEYI), and E196. The 191-residue stretch at 112–302 (NLAAEKLAIK…EFELHLRAIL (191 aa)) folds into the ATP-grasp domain. Mg(2+) is bound by residues E261 and E273. Residues D280, K350, and 357-358 (RR) contribute to the N(1)-(5-phospho-beta-D-ribosyl)glycinamide site.

This sequence belongs to the PurK/PurT family. As to quaternary structure, homodimer.

It carries out the reaction N(1)-(5-phospho-beta-D-ribosyl)glycinamide + formate + ATP = N(2)-formyl-N(1)-(5-phospho-beta-D-ribosyl)glycinamide + ADP + phosphate + H(+). The protein operates within purine metabolism; IMP biosynthesis via de novo pathway; N(2)-formyl-N(1)-(5-phospho-D-ribosyl)glycinamide from N(1)-(5-phospho-D-ribosyl)glycinamide (formate route): step 1/1. Its function is as follows. Involved in the de novo purine biosynthesis. Catalyzes the transfer of formate to 5-phospho-ribosyl-glycinamide (GAR), producing 5-phospho-ribosyl-N-formylglycinamide (FGAR). Formate is provided by PurU via hydrolysis of 10-formyl-tetrahydrofolate. The chain is Formate-dependent phosphoribosylglycinamide formyltransferase from Prochlorococcus marinus (strain SARG / CCMP1375 / SS120).